Reading from the N-terminus, the 65-residue chain is Large ribosomal subunit protein bL35 (65 aa).

Residues 1 to 21 (MPKMKTKSGAAKRFTVRAGGT) are disordered.

Belongs to the bacterial ribosomal protein bL35 family.

The chain is Large ribosomal subunit protein bL35 from Nitrosospira multiformis (strain ATCC 25196 / NCIMB 11849 / C 71).